A 337-amino-acid chain; its full sequence is tRNA(Ile)-lysidine synthase (337 aa).

40–45 (SGGQDS) contacts ATP.

Belongs to the tRNA(Ile)-lysidine synthase family.

It is found in the cytoplasm. It carries out the reaction cytidine(34) in tRNA(Ile2) + L-lysine + ATP = lysidine(34) in tRNA(Ile2) + AMP + diphosphate + H(+). Functionally, ligates lysine onto the cytidine present at position 34 of the AUA codon-specific tRNA(Ile) that contains the anticodon CAU, in an ATP-dependent manner. Cytidine is converted to lysidine, thus changing the amino acid specificity of the tRNA from methionine to isoleucine. In Parasynechococcus marenigrum (strain WH8102), this protein is tRNA(Ile)-lysidine synthase.